We begin with the raw amino-acid sequence, 115 residues long: Photosystem II reaction center Psb28 protein (115 aa).

Belongs to the Psb28 family. As to quaternary structure, part of the photosystem II complex.

The protein localises to the plastid. Its subcellular location is the chloroplast thylakoid membrane. This chain is Photosystem II reaction center Psb28 protein, found in Trieres chinensis (Marine centric diatom).